The primary structure comprises 361 residues: Peptide chain release factor 1 (361 aa).

Q236 is modified (N5-methylglutamine). Positions 286–306 are disordered; the sequence is AADSQRAEARKGQVGSGDRSE.

Belongs to the prokaryotic/mitochondrial release factor family. Methylated by PrmC. Methylation increases the termination efficiency of RF1.

It is found in the cytoplasm. Its function is as follows. Peptide chain release factor 1 directs the termination of translation in response to the peptide chain termination codons UAG and UAA. In Magnetococcus marinus (strain ATCC BAA-1437 / JCM 17883 / MC-1), this protein is Peptide chain release factor 1.